Consider the following 776-residue polypeptide: Structure-specific endonuclease subunit SLX4 (776 aa).

Over residues 201-217 (EEQMVSDDNSSTEDDTD) the composition is skewed to acidic residues. 3 disordered regions span residues 201–223 (EEQM…QNDG), 263–283 (KSLQ…PDQN), and 507–531 (PPLD…KPHS).

Belongs to the SLX4 family. In terms of assembly, forms a heterodimer with SLX1. In terms of processing, phosphorylated in response to DNA damage.

It is found in the nucleus. Its function is as follows. Regulatory subunit of the SLX1-SLX4 structure-specific endonuclease that resolves DNA secondary structures generated during DNA repair and recombination. Has endonuclease activity towards branched DNA substrates, introducing single-strand cuts in duplex DNA close to junctions with ss-DNA. This Candida albicans (strain SC5314 / ATCC MYA-2876) (Yeast) protein is Structure-specific endonuclease subunit SLX4.